Reading from the N-terminus, the 253-residue chain is Tropomyosin-1 (253 aa).

A coiled-coil region spans residues 7–253 (VNKLVRLQGK…MDDVGDDDTQ (247 aa)).

It belongs to the tropomyosin family. Homodimer.

Functionally, tropomyosin, in association with the troponin complex, plays a central role in the calcium dependent regulation of muscle contraction. The sequence is that of Tropomyosin-1 (TROP1) from Hydra vulgaris (Hydra).